The primary structure comprises 78 residues: Exodeoxyribonuclease 7 small subunit (78 aa).

This sequence belongs to the XseB family. As to quaternary structure, heterooligomer composed of large and small subunits.

Its subcellular location is the cytoplasm. It catalyses the reaction Exonucleolytic cleavage in either 5'- to 3'- or 3'- to 5'-direction to yield nucleoside 5'-phosphates.. Its function is as follows. Bidirectionally degrades single-stranded DNA into large acid-insoluble oligonucleotides, which are then degraded further into small acid-soluble oligonucleotides. The chain is Exodeoxyribonuclease 7 small subunit from Paracoccus zeaxanthinifaciens.